The sequence spans 357 residues: Uroporphyrinogen decarboxylase (357 aa).

Residues 27 to 31, aspartate 77, tyrosine 154, serine 209, and histidine 330 each bind substrate; that span reads RQAGR.

Belongs to the uroporphyrinogen decarboxylase family. Homodimer.

The protein localises to the cytoplasm. It catalyses the reaction uroporphyrinogen III + 4 H(+) = coproporphyrinogen III + 4 CO2. The protein operates within porphyrin-containing compound metabolism; protoporphyrin-IX biosynthesis; coproporphyrinogen-III from 5-aminolevulinate: step 4/4. Catalyzes the decarboxylation of four acetate groups of uroporphyrinogen-III to yield coproporphyrinogen-III. This is Uroporphyrinogen decarboxylase from Acinetobacter baumannii (strain AB0057).